Here is a 256-residue protein sequence, read N- to C-terminus: Tumor necrosis factor receptor superfamily member 9 (256 aa).

The signal sequence occupies residues 1 to 23; it reads MGNNCYNVVVIVLLLVGCEKVGA. TNFR-Cys repeat units lie at residues 24 to 45, 46 to 85, 86 to 117, and 118 to 159; these read VQNS…PVCK, SCPP…NAEC, ECIE…QGCK, and TCSL…VVCG. Residues 24–187 are Extracellular-facing; it reads VQNSCDNCQP…GPGGHSLQVL (164 aa). 9 disulfides stabilise this stretch: cysteine 28–cysteine 37, cysteine 31–cysteine 44, cysteine 47–cysteine 61, cysteine 64–cysteine 77, cysteine 67–cysteine 85, cysteine 87–cysteine 93, cysteine 98–cysteine 105, cysteine 101–cysteine 116, and cysteine 119–cysteine 133. Residues asparagine 128 and asparagine 138 are each glycosylated (N-linked (GlcNAc...) asparagine). Cysteine 139 and cysteine 158 are oxidised to a cystine. Residues 188 to 208 traverse the membrane as a helical segment; that stretch reads TLFLALTSALLLALIFITLLF. At 209-256 the chain is on the cytoplasmic side; that stretch reads SVLKWIRKKFPHIFKQPFKKTTGAAQEEDACSCRCPQEEEGGGGGYEL.

In terms of assembly, predominantly homodimeric, but may also exist as a monomer. Associates with p56-LCK. Interacts with TRAF1, TRAF2 and TRAF3. In terms of tissue distribution, expressed in activated thymocytes, splenic T cells, CD4(+), and CD8(+) T-cells.

It is found in the cell membrane. In terms of biological role, receptor for TNFSF9/4-1BBL. Conveys a signal that enhances CD8(+) T-cell survival, cytotoxicity, and mitochondrial activity, thereby promoting immunity against viruses and tumors. The chain is Tumor necrosis factor receptor superfamily member 9 (Tnfrsf9) from Mus musculus (Mouse).